A 404-amino-acid chain; its full sequence is Lipase lipl-3 (404 aa).

An N-terminal signal peptide occupies residues 1-20 (MCSSLCALLLVILAVHNVHA). Asparagine 65 carries N-linked (GlcNAc...) asparagine glycosylation. Serine 168 (nucleophile) is an active-site residue. N-linked (GlcNAc...) asparagine glycosylation occurs at asparagine 272. Active-site charge relay system residues include aspartate 344 and histidine 376.

This sequence belongs to the AB hydrolase superfamily. Lipase family.

It is found in the secreted. It localises to the lysosome lumen. Functionally, lipase that, together with lipl-1, plays a role in the response to nutrient deprivation by controlling lipid metabolism. Specifically, involved in the breakdown of lipids during lipophagy, a process during which lipids contained in lipid droplets that have been delivered to lysosomes by autophagy are degraded. The sequence is that of Lipase lipl-3 from Caenorhabditis elegans.